A 325-amino-acid chain; its full sequence is HTH-type transcriptional regulator VqsM (325 aa).

The HTH araC/xylS-type domain occupies Gln-226–Ser-323. 2 DNA-binding regions (H-T-H motif) span residues Val-243 to Gly-264 and Val-290 to Thr-313.

Functionally, transcriptional regulator involved in both the repression (at least 99 genes, such as mexR and algU) and in the activation (at least 203 genes, such as mvfR, rsaL, vqsR and rpoS) of regulatory or putative regulatory proteins which are implicated in quorum sensing, virulence and multidrug resistance. The protein is HTH-type transcriptional regulator VqsM (vqsM) of Pseudomonas aeruginosa (strain ATCC 15692 / DSM 22644 / CIP 104116 / JCM 14847 / LMG 12228 / 1C / PRS 101 / PAO1).